A 458-amino-acid chain; its full sequence is Photosystem II CP43 reaction center protein (458 aa).

A run of 5 helical transmembrane segments spans residues 54–78, 119–140, 163–185, 240–260, and 276–297; these read LFEV…PHLA, LRGP…KDKN, KAMF…RVIT, RPFN…LSYS, and WFNN…ASQA. E352 lines the [CaMn4O5] cluster pocket. A helical membrane pass occupies residues 432–456; it reads RARAAAAGFEKGIDRKTEPVLSMSD.

It belongs to the PsbB/PsbC family. PsbC subfamily. In terms of assembly, PSII is composed of 1 copy each of membrane proteins PsbA, PsbB, PsbC, PsbD, PsbE, PsbF, PsbH, PsbI, PsbJ, PsbK, PsbL, PsbM, PsbT, PsbX, PsbY, PsbZ, Psb30/Ycf12, peripheral proteins PsbO, CyanoQ (PsbQ), PsbU, PsbV and a large number of cofactors. It forms dimeric complexes. Requires Binds multiple chlorophylls and provides some of the ligands for the Ca-4Mn-5O cluster of the oxygen-evolving complex. It may also provide a ligand for a Cl- that is required for oxygen evolution. PSII binds additional chlorophylls, carotenoids and specific lipids. as cofactor.

The protein localises to the cellular thylakoid membrane. Functionally, one of the components of the core complex of photosystem II (PSII). It binds chlorophyll and helps catalyze the primary light-induced photochemical processes of PSII. PSII is a light-driven water:plastoquinone oxidoreductase, using light energy to abstract electrons from H(2)O, generating O(2) and a proton gradient subsequently used for ATP formation. This is Photosystem II CP43 reaction center protein from Prochlorothrix hollandica.